A 429-amino-acid chain; its full sequence is Choline kinase A2 (429 aa).

ATP is bound by residues Lys82 to Met88, Arg111, Glu152 to Pro158, and Gln257. Gly84–Ser86 lines the substrate pocket. Ca(2+) is bound at residue Glu258. Residue Asp301 participates in ATP binding. Glu320 and Ile323 together coordinate Ca(2+).

Belongs to the choline/ethanolamine kinase family. As to quaternary structure, homodimer. A small proportion exists as higher oligomers. Mg(2+) is required as a cofactor.

The enzyme catalyses choline + ATP = phosphocholine + ADP + H(+). The catalysed reaction is ethanolamine + ATP = phosphoethanolamine + ADP + H(+). The protein operates within phospholipid metabolism; phosphatidylcholine biosynthesis; phosphocholine from choline: step 1/1. Its pathway is phospholipid metabolism; phosphatidylethanolamine biosynthesis; phosphatidylethanolamine from ethanolamine: step 1/3. Inhibited by Ca(2+). Mild inhibition by high levels of Mg(2+)(&gt;10 mM). Catalyzes the first step in phosphatidylcholine biosynthesis. May contribute to phosphatidylethanolamine biosynthesis. Phosphorylates choline and ethanolamine but the activity is much higher with choline. This Caenorhabditis elegans protein is Choline kinase A2.